Reading from the N-terminus, the 301-residue chain is NAD kinase (301 aa).

The Proton acceptor role is filled by D84. Residues 84-85 (DG), R89, 158-159 (NE), K169, N188, 199-204 (TAYSFS), and Q258 contribute to the NAD(+) site.

This sequence belongs to the NAD kinase family. The cofactor is a divalent metal cation.

The protein localises to the cytoplasm. The enzyme catalyses NAD(+) + ATP = ADP + NADP(+) + H(+). Its function is as follows. Involved in the regulation of the intracellular balance of NAD and NADP, and is a key enzyme in the biosynthesis of NADP. Catalyzes specifically the phosphorylation on 2'-hydroxyl of the adenosine moiety of NAD to yield NADP. The chain is NAD kinase from Tropheryma whipplei (strain Twist) (Whipple's bacillus).